A 911-amino-acid polypeptide reads, in one-letter code: Brevican core protein (911 aa).

The first 22 residues, 1 to 22 (MAQLFLPLLAALVLAQAPAALA), serve as a signal peptide directing secretion. The Ig-like V-type domain maps to 36 to 155 (RVRIAGDAPL…SSDAVEVKVK (120 aa)). Cystine bridges form between Cys57/Cys137, Cys179/Cys250, Cys203/Cys224, Cys277/Cys352, and Cys301/Cys322. Residue Asn130 is glycosylated (N-linked (GlcNAc...) asparagine). Link domains follow at residues 157–252 (VVFL…YCYA) and 257–354 (GELF…YCFR). N-linked (GlcNAc...) asparagine glycosylation occurs at Asn337. The interval 391–641 (QLPQEATESE…PTDSASRGGV (251 aa)) is disordered. The residue at position 418 (Ser418) is a Phosphoserine. O-linked (Xyl...) (chondroitin sulfate) serine glycosylation is present at Ser418. Residues 454–478 (EEEEKYEDEEEKEEEEEEEEVEDEA) show a composition bias toward acidic residues. 2 O-glycosylated at two sites regions span residues 520-530 (SPLPDGESEAS) and 540-545 (TETLPT). The tract at residues 569–575 (TGGPELS) is O-glycosylated at one site. Positions 612–627 (EDNSGRTAPAGTSVQA) are enriched in polar residues. A lipid anchor (GPI-anchor amidated alanine) is attached at Ala646. The region spanning 646 to 682 (ASGDCVPSPCHNGGTCLEEEEGVRCLCLPGYGGDLCD) is the EGF-like domain. Disulfide bonds link Cys650/Cys661, Cys655/Cys670, Cys672/Cys681, Cys688/Cys699, Cys716/Cys808, Cys784/Cys800, Cys815/Cys858, and Cys844/Cys871. Residues 695-809 (FQGACYKHFS…CNYHLSYTCK (115 aa)) enclose the C-type lectin domain. Residues 813–873 (VSCGPPPELP…WEAPQISCVP (61 aa)) enclose the Sushi domain. O-linked (GalNAc...) serine glycans are attached at residues Ser905 and Ser906.

The protein belongs to the aggrecan/versican proteoglycan family. In terms of assembly, interacts with TNR. O-glycosylated; contains chondroitin sulfate. O-glycosylated with a core 1 or possibly core 8 glycan. In terms of tissue distribution, expressed in the retina, specifically in the inner nuclear layer, inner plexiform layer and ganglion cell layer (at protein level). Detected in cerebrospinal fluid (at protein level). Detected in urine (at protein level).

The protein resides in the secreted. The protein localises to the extracellular space. It localises to the extracellular matrix. It is found in the membrane. May play a role in the terminally differentiating and the adult nervous system during postnatal development. Could stabilize interactions between hyaluronan (HA) and brain proteoglycans. The chain is Brevican core protein (BCAN) from Homo sapiens (Human).